Here is a 299-residue protein sequence, read N- to C-terminus: Delta-9 desaturase-like 2 protein (299 aa).

The helical transmembrane segment at 55-75 (WEAFRFGIILAILTNLCITFS) threads the bilayer. The Histidine box-1 motif lies at 77 to 82 (HRNLTH). A Histidine box-2 motif is present at residues 114 to 118 (HRFHH). A helical membrane pass occupies residues 174–194 (LVLHILAFWTLIYLWGGLPYL). A Histidine box-3 motif is present at residues 246-250 (HNNHH). The helical transmembrane segment at 262 to 282 (WYQLDITWYLIWFFQALGLAT) threads the bilayer.

The protein belongs to the fatty acid desaturase type 1 family. It depends on Fe cation as a cofactor.

It is found in the endoplasmic reticulum membrane. Its pathway is lipid metabolism; polyunsaturated fatty acid biosynthesis. The protein is Delta-9 desaturase-like 2 protein of Arabidopsis thaliana (Mouse-ear cress).